The primary structure comprises 232 residues: Orotate phosphoribosyltransferase (232 aa).

5-phospho-alpha-D-ribose 1-diphosphate-binding positions include Arg-107, Lys-108, Lys-111, His-113, and 133 to 141 (EDLTTAGGS). Position 137 (Thr-137) interacts with orotate.

The protein belongs to the purine/pyrimidine phosphoribosyltransferase family. PyrE subfamily. Homodimer. The cofactor is Mg(2+).

The enzyme catalyses orotidine 5'-phosphate + diphosphate = orotate + 5-phospho-alpha-D-ribose 1-diphosphate. It functions in the pathway pyrimidine metabolism; UMP biosynthesis via de novo pathway; UMP from orotate: step 1/2. Catalyzes the transfer of a ribosyl phosphate group from 5-phosphoribose 1-diphosphate to orotate, leading to the formation of orotidine monophosphate (OMP). The sequence is that of Orotate phosphoribosyltransferase from Sinorhizobium fredii (strain NBRC 101917 / NGR234).